The sequence spans 288 residues: Acetyl-coenzyme A carboxylase carboxyl transferase subunit beta (288 aa).

Positions 32–288 (LLLICPKCKK…ILMLHNVEAR (257 aa)) constitute a CoA carboxyltransferase N-terminal domain. Cysteine 36, cysteine 39, cysteine 55, and cysteine 58 together coordinate Zn(2+). Residues 36–58 (CPKCKKTLLKSELADNLDVCREC) form a C4-type zinc finger.

Belongs to the AccD/PCCB family. Acetyl-CoA carboxylase is a heterohexamer composed of biotin carboxyl carrier protein (AccB), biotin carboxylase (AccC) and two subunits each of ACCase subunit alpha (AccA) and ACCase subunit beta (AccD). Requires Zn(2+) as cofactor.

The protein resides in the cytoplasm. The catalysed reaction is N(6)-carboxybiotinyl-L-lysyl-[protein] + acetyl-CoA = N(6)-biotinyl-L-lysyl-[protein] + malonyl-CoA. It participates in lipid metabolism; malonyl-CoA biosynthesis; malonyl-CoA from acetyl-CoA: step 1/1. Its function is as follows. Component of the acetyl coenzyme A carboxylase (ACC) complex. Biotin carboxylase (BC) catalyzes the carboxylation of biotin on its carrier protein (BCCP) and then the CO(2) group is transferred by the transcarboxylase to acetyl-CoA to form malonyl-CoA. The protein is Acetyl-coenzyme A carboxylase carboxyl transferase subunit beta of Ruminiclostridium cellulolyticum (strain ATCC 35319 / DSM 5812 / JCM 6584 / H10) (Clostridium cellulolyticum).